Reading from the N-terminus, the 327-residue chain is Phenylalanine--tRNA ligase alpha subunit (327 aa).

E252 lines the Mg(2+) pocket.

Belongs to the class-II aminoacyl-tRNA synthetase family. Phe-tRNA synthetase alpha subunit type 1 subfamily. As to quaternary structure, tetramer of two alpha and two beta subunits. Mg(2+) is required as a cofactor.

It is found in the cytoplasm. The enzyme catalyses tRNA(Phe) + L-phenylalanine + ATP = L-phenylalanyl-tRNA(Phe) + AMP + diphosphate + H(+). This is Phenylalanine--tRNA ligase alpha subunit from Vibrio campbellii (strain ATCC BAA-1116).